An 880-amino-acid chain; its full sequence is Alanine--tRNA ligase (880 aa).

Zn(2+)-binding residues include His-563, His-567, Cys-665, and His-669.

This sequence belongs to the class-II aminoacyl-tRNA synthetase family. The cofactor is Zn(2+).

It is found in the cytoplasm. The catalysed reaction is tRNA(Ala) + L-alanine + ATP = L-alanyl-tRNA(Ala) + AMP + diphosphate. In terms of biological role, catalyzes the attachment of alanine to tRNA(Ala) in a two-step reaction: alanine is first activated by ATP to form Ala-AMP and then transferred to the acceptor end of tRNA(Ala). Also edits incorrectly charged Ser-tRNA(Ala) and Gly-tRNA(Ala) via its editing domain. This is Alanine--tRNA ligase from Desulforudis audaxviator (strain MP104C).